Consider the following 410-residue polypeptide: Transcription factor SPN1 (410 aa).

Positions 1 to 132 (MSTADQEQPK…SRQELEEKLD (132 aa)) are disordered. Residue threonine 15 is modified to Phosphothreonine. The span at 20–52 (TASSQKSTINAENENTKQNQSMEPQETSKGTSN) shows a compositional bias: polar residues. A Phosphoserine; by ATM or ATR modification is found at serine 23. Serine 40 is modified (phosphoserine). Positions 53 to 65 (DTKDPDNGEKNEE) are enriched in basic and acidic residues. Serine 85 bears the Phosphoserine mark. Residue threonine 86 is modified to Phosphothreonine. Position 89 is a phosphoserine (serine 89). The 78-residue stretch at 219 to 296 (QSVRIWLEPL…AEWTRPIIGA (78 aa)) folds into the TFIIS N-terminal domain. A disordered region spans residues 318 to 346 (KSVMDSAKNRKKKSKSGEDPTSRGSSVQT).

It belongs to the IWS1 family. Interacts with ABD1, RBP1, SPT5 and SPT6.

It localises to the nucleus. In terms of biological role, transcription factor involved in RNA polymerase II transcription regulation. May function in both SPT15/TBP post-recruitment and recruitment steps of transcription. The polypeptide is Transcription factor SPN1 (SPN1) (Saccharomyces cerevisiae (strain ATCC 204508 / S288c) (Baker's yeast)).